The chain runs to 274 residues: Large ribosomal subunit protein uL2cz/uL2cy (274 aa).

Residues 224–274 (NPVDHPHGGGEGRAPIGRKKPATPWGYPALGRRSRKRNKYSDNLILRRRSK) form a disordered region.

Belongs to the universal ribosomal protein uL2 family. As to quaternary structure, part of the 50S ribosomal subunit.

It is found in the plastid. The protein resides in the chloroplast. In Carica papaya (Papaya), this protein is Large ribosomal subunit protein uL2cz/uL2cy (rpl2-A).